Consider the following 351-residue polypeptide: MTSSANIATDSPANTDVLIIGAGPVGLFAAFEAGVIGLSSVIVDNVERAGGQCIELYPDKPIYDIPAIPSCTARELVDRLLEQCRPFAPPLHLGHRVDTVEQLDNGRWLARTDKGLTVESAAILIAAGNGSFVPQRLQLDDAAPLEGHYVHYSVSNLADFAGKKMVVAGGGDSALDWALALRTVAQHVTLVHRRNGFSATDSSVANMRRAVEAGEMNFAVGTIASLNAPGGQLESIELRQAEGSVQLATDHLLVLFGLVADLGPIQQWGVEVRGGRITVDTSNYESSRPGIFAAGDIAGYPNKQKLILSGFHEASLALRKAYSYAYPDKKRVHIHSSYDAKLAERVAASHT.

7 residues coordinate FAD: aspartate 44, glutamine 52, tyrosine 57, valine 97, phenylalanine 132, aspartate 296, and serine 337.

Belongs to the ferredoxin--NADP reductase type 2 family. As to quaternary structure, homodimer. FAD serves as cofactor.

It carries out the reaction 2 reduced [2Fe-2S]-[ferredoxin] + NADP(+) + H(+) = 2 oxidized [2Fe-2S]-[ferredoxin] + NADPH. This Paraburkholderia phymatum (strain DSM 17167 / CIP 108236 / LMG 21445 / STM815) (Burkholderia phymatum) protein is Ferredoxin--NADP reductase.